Here is a 72-residue protein sequence, read N- to C-terminus: Large ribosomal subunit protein bL31 (72 aa).

Positions 16, 18, 37, and 40 each coordinate Zn(2+).

Belongs to the bacterial ribosomal protein bL31 family. Type A subfamily. As to quaternary structure, part of the 50S ribosomal subunit. It depends on Zn(2+) as a cofactor.

In terms of biological role, binds the 23S rRNA. This Pseudomonas fluorescens (strain Pf0-1) protein is Large ribosomal subunit protein bL31.